Consider the following 69-residue polypeptide: Ribosome modulation factor (69 aa).

Belongs to the ribosome modulation factor family.

The protein localises to the cytoplasm. During stationary phase, converts 70S ribosomes to an inactive dimeric form (100S ribosomes). The chain is Ribosome modulation factor from Hahella chejuensis (strain KCTC 2396).